Here is a 230-residue protein sequence, read N- to C-terminus: Large ribosomal subunit protein uL1 (230 aa).

Belongs to the universal ribosomal protein uL1 family. Part of the 50S ribosomal subunit.

In terms of biological role, binds directly to 23S rRNA. The L1 stalk is quite mobile in the ribosome, and is involved in E site tRNA release. Functionally, protein L1 is also a translational repressor protein, it controls the translation of the L11 operon by binding to its mRNA. In Nitrobacter winogradskyi (strain ATCC 25391 / DSM 10237 / CIP 104748 / NCIMB 11846 / Nb-255), this protein is Large ribosomal subunit protein uL1.